Here is a 335-residue protein sequence, read N- to C-terminus: Holliday junction branch migration complex subunit RuvB (335 aa).

Residues 1-183 (MDERIISSET…FGVIDHLEFY (183 aa)) are large ATPase domain (RuvB-L). ATP contacts are provided by residues Leu-22, Arg-23, Gly-64, Lys-67, Thr-68, Thr-69, 130–132 (EDY), Arg-173, Tyr-183, and Arg-220. Thr-68 is a binding site for Mg(2+). The small ATPAse domain (RuvB-S) stretch occupies residues 184–254 (TEEQLTEIVL…LAKEALTLLQ (71 aa)). The tract at residues 257 to 335 (PRGLDTIDQK…HLGISYEKEV (79 aa)) is head domain (RuvB-H). The DNA site is built by Arg-293, Arg-312, and Arg-317.

It belongs to the RuvB family. In terms of assembly, homohexamer. Forms an RuvA(8)-RuvB(12)-Holliday junction (HJ) complex. HJ DNA is sandwiched between 2 RuvA tetramers; dsDNA enters through RuvA and exits via RuvB. An RuvB hexamer assembles on each DNA strand where it exits the tetramer. Each RuvB hexamer is contacted by two RuvA subunits (via domain III) on 2 adjacent RuvB subunits; this complex drives branch migration. In the full resolvosome a probable DNA-RuvA(4)-RuvB(12)-RuvC(2) complex forms which resolves the HJ.

It localises to the cytoplasm. It carries out the reaction ATP + H2O = ADP + phosphate + H(+). In terms of biological role, the RuvA-RuvB-RuvC complex processes Holliday junction (HJ) DNA during genetic recombination and DNA repair, while the RuvA-RuvB complex plays an important role in the rescue of blocked DNA replication forks via replication fork reversal (RFR). RuvA specifically binds to HJ cruciform DNA, conferring on it an open structure. The RuvB hexamer acts as an ATP-dependent pump, pulling dsDNA into and through the RuvAB complex. RuvB forms 2 homohexamers on either side of HJ DNA bound by 1 or 2 RuvA tetramers; 4 subunits per hexamer contact DNA at a time. Coordinated motions by a converter formed by DNA-disengaged RuvB subunits stimulates ATP hydrolysis and nucleotide exchange. Immobilization of the converter enables RuvB to convert the ATP-contained energy into a lever motion, pulling 2 nucleotides of DNA out of the RuvA tetramer per ATP hydrolyzed, thus driving DNA branch migration. The RuvB motors rotate together with the DNA substrate, which together with the progressing nucleotide cycle form the mechanistic basis for DNA recombination by continuous HJ branch migration. Branch migration allows RuvC to scan DNA until it finds its consensus sequence, where it cleaves and resolves cruciform DNA. The polypeptide is Holliday junction branch migration complex subunit RuvB (Listeria monocytogenes serotype 4b (strain CLIP80459)).